Reading from the N-terminus, the 1801-residue chain is Sperm flagellar protein 2 (1801 aa).

The region spanning 1–105 is the Calponin-homology (CH) domain; that stretch reads MSEILCQWLN…LLYQLYIALQ (105 aa). Coiled coils occupy residues 176–260 and 321–395; these read EKFE…KDLQ and AHEA…TKQA. The segment at 632-659 is disordered; sequence QDKNELTDTQVPGEAAPQKEGTKSSDFE. Coiled coils occupy residues 722-748 and 869-895; these read NQAK…KAQM and ATEV…SAVS. Basic and acidic residues-rich tracts occupy residues 883–892 and 909–918; these read LEEKETEKKS and EAEKEKEVHQ. Positions 883-949 are disordered; the sequence is LEEKETEKKS…KISVKKSPID (67 aa). Residues 1051 to 1077 adopt a coiled-coil conformation; sequence EDLWEDEETKAELHQRVNDLRDRLWDI. 2 stretches are compositionally biased toward basic and acidic residues: residues 1233-1250 and 1261-1295; these read RLAE…KEKS and KEKE…AEKK. 3 disordered regions span residues 1233-1304, 1651-1695, and 1781-1801; these read RLAE…SPVV, KTSI…NANT, and SEHA…DEKK. A coiled-coil region spans residues 1252 to 1286; sequence QSGTNKKAKKEKEQAKKEKEQAKKEKEQAKKEKEP. Positions 1305 to 1657 are interaction with IFT20; it reads EVSPVTITPE…TAEKTSISSV (353 aa). The stretch at 1665–1695 forms a coiled coil; sequence EAEENSTREELKEEKDERDQKEEEIPENANT. Over residues 1669–1687 the composition is skewed to basic and acidic residues; it reads NSTREELKEEKDERDQKEE.

In terms of assembly, interacts (via C-terminus) with IFT20. Interacts with DYNC1I2. Predominantly expressed in ciliated tissues such as lung, trachea, testis, brain, and at lower levels in kidney and spleen.

The protein resides in the cell projection. Its subcellular location is the cilium. It is found in the flagellum. It localises to the cytoplasm. The protein localises to the golgi apparatus. In terms of biological role, required for correct axoneme development in spermatozoa. Important for normal development of the manchette and sperm head morphology. Essential for male fertility. Plays a role in localization of the intraflagellar transport protein IFT20 to the manchette, suggesting function as an adapter for dynein-mediated protein transport during spermatogenesis. Also plays a role in bone growth where it seems to be required for normal osteoblast differentiation. This is Sperm flagellar protein 2 (Spef2) from Rattus norvegicus (Rat).